Consider the following 347-residue polypeptide: Phosphate acyltransferase (347 aa).

The protein belongs to the PlsX family. As to quaternary structure, homodimer. Probably interacts with PlsY.

The protein localises to the cytoplasm. The enzyme catalyses a fatty acyl-[ACP] + phosphate = an acyl phosphate + holo-[ACP]. Its pathway is lipid metabolism; phospholipid metabolism. Functionally, catalyzes the reversible formation of acyl-phosphate (acyl-PO(4)) from acyl-[acyl-carrier-protein] (acyl-ACP). This enzyme utilizes acyl-ACP as fatty acyl donor, but not acyl-CoA. This chain is Phosphate acyltransferase, found in Methylobacillus flagellatus (strain ATCC 51484 / DSM 6875 / VKM B-1610 / KT).